Here is a 299-residue protein sequence, read N- to C-terminus: ATP phosphoribosyltransferase (299 aa).

The protein belongs to the ATP phosphoribosyltransferase family. Long subfamily. In terms of assembly, equilibrium between an active dimeric form, an inactive hexameric form and higher aggregates. Interconversion between the various forms is largely reversible and is influenced by the natural substrates and inhibitors of the enzyme. It depends on Mg(2+) as a cofactor.

The protein localises to the cytoplasm. The catalysed reaction is 1-(5-phospho-beta-D-ribosyl)-ATP + diphosphate = 5-phospho-alpha-D-ribose 1-diphosphate + ATP. It participates in amino-acid biosynthesis; L-histidine biosynthesis; L-histidine from 5-phospho-alpha-D-ribose 1-diphosphate: step 1/9. With respect to regulation, feedback inhibited by histidine. In terms of biological role, catalyzes the condensation of ATP and 5-phosphoribose 1-diphosphate to form N'-(5'-phosphoribosyl)-ATP (PR-ATP). Has a crucial role in the pathway because the rate of histidine biosynthesis seems to be controlled primarily by regulation of HisG enzymatic activity. The polypeptide is ATP phosphoribosyltransferase (Salmonella agona (strain SL483)).